Here is a 487-residue protein sequence, read N- to C-terminus: N-succinylglutamate 5-semialdehyde dehydrogenase (487 aa).

NAD(+) is bound at residue 221-226 (GSSDTG). Active-site residues include E244 and C278.

This sequence belongs to the aldehyde dehydrogenase family. AstD subfamily.

The enzyme catalyses N-succinyl-L-glutamate 5-semialdehyde + NAD(+) + H2O = N-succinyl-L-glutamate + NADH + 2 H(+). The protein operates within amino-acid degradation; L-arginine degradation via AST pathway; L-glutamate and succinate from L-arginine: step 4/5. Functionally, catalyzes the NAD-dependent reduction of succinylglutamate semialdehyde into succinylglutamate. This chain is N-succinylglutamate 5-semialdehyde dehydrogenase, found in Burkholderia multivorans (strain ATCC 17616 / 249).